The primary structure comprises 152 residues: Flagellar assembly factor FliW (152 aa).

Belongs to the FliW family. Interacts with translational regulator CsrA and flagellin(s).

It localises to the cytoplasm. In terms of biological role, acts as an anti-CsrA protein, binds CsrA and prevents it from repressing translation of its target genes, one of which is flagellin. Binds to flagellin and participates in the assembly of the flagellum. This chain is Flagellar assembly factor FliW, found in Desulfitobacterium hafniense (strain DSM 10664 / DCB-2).